We begin with the raw amino-acid sequence, 150 residues long: Large ribosomal subunit protein bL9 (150 aa).

Belongs to the bacterial ribosomal protein bL9 family.

Binds to the 23S rRNA. In Ralstonia nicotianae (strain ATCC BAA-1114 / GMI1000) (Ralstonia solanacearum), this protein is Large ribosomal subunit protein bL9.